We begin with the raw amino-acid sequence, 34 residues long: Antimicrobial peptide Alo-2 (34 aa).

Cystine bridges form between Cys1/Cys18, Cys8/Cys22, and Cys17/Cys33.

The protein resides in the secreted. Its function is as follows. Has antifungal activity against C.glabrata. This chain is Antimicrobial peptide Alo-2, found in Acrocinus longimanus (Giant harlequin beetle).